A 153-amino-acid chain; its full sequence is MAKITGNLVATGLKFGIVTARFNDFINDKLLSGAIDTLVRHGADENNIDTAWVPGAFEIPLVAKKMATSGKYDAVICLGTVIRGSTTHYDYVCNEAAKGIGAVALETGVPVIFGVLTTENIEQAIERAGTKAGNKGSECALGAIEIVNVLKAI.

5-amino-6-(D-ribitylamino)uracil-binding positions include Phe22, 56–58 (AFE), and 80–82 (TVI). 85–86 (ST) is a (2S)-2-hydroxy-3-oxobutyl phosphate binding site. His88 serves as the catalytic Proton donor. Phe113 contributes to the 5-amino-6-(D-ribitylamino)uracil binding site. Arg127 is a binding site for (2S)-2-hydroxy-3-oxobutyl phosphate.

It belongs to the DMRL synthase family. In terms of assembly, forms an icosahedral capsid composed of 60 subunits, arranged as a dodecamer of pentamers.

It carries out the reaction (2S)-2-hydroxy-3-oxobutyl phosphate + 5-amino-6-(D-ribitylamino)uracil = 6,7-dimethyl-8-(1-D-ribityl)lumazine + phosphate + 2 H2O + H(+). It participates in cofactor biosynthesis; riboflavin biosynthesis; riboflavin from 2-hydroxy-3-oxobutyl phosphate and 5-amino-6-(D-ribitylamino)uracil: step 1/2. Functionally, catalyzes the formation of 6,7-dimethyl-8-ribityllumazine by condensation of 5-amino-6-(D-ribitylamino)uracil with 3,4-dihydroxy-2-butanone 4-phosphate. This is the penultimate step in the biosynthesis of riboflavin. The chain is 6,7-dimethyl-8-ribityllumazine synthase from Actinobacillus pleuropneumoniae serotype 3 (strain JL03).